Consider the following 270-residue polypeptide: uncharacterized protein (270 aa).

Residues C43–H112 form the J domain. The interval E239–S270 is disordered. Polar residues predominate over residues K242–S251. Residues S252–S270 show a composition bias toward pro residues.

This is an uncharacterized protein from Schizosaccharomyces pombe (strain 972 / ATCC 24843) (Fission yeast).